A 433-amino-acid chain; its full sequence is Protein root UVB sensitive 2, chloroplastic (433 aa).

Belongs to the RUS1 family. As to quaternary structure, interacts (via the DUF647 domain) with RUS1 (via the DUF647 domain). As to expression, expressed throughout the plant, with a higher expression near the root apical meristem, in the cortex region of the root elongation zone, in lateral roots and emerging lateral roots. Not detected in extreme root apical meristem or root cap.

The protein localises to the plastid. Functionally, involved in a root UV-B sensing pathway and in the protection against the hypersensitivity to very low-fluence-rate (VLF) UV-B. RSU1 and RUS2 are probably both negative modulators of the same UV-B perception pathway, which when overstimulated in the roots causes a block to postgermination development. Required for polar auxin transport and to maintain the normal levels of PIN proteins in the root. This Arabidopsis thaliana (Mouse-ear cress) protein is Protein root UVB sensitive 2, chloroplastic.